The primary structure comprises 567 residues: Eukaryotic translation initiation factor 3 subunit D (567 aa).

Disordered stretches follow at residues P12–F34 and G122–R160. The segment covering G128–A142 has biased composition (gly residues). Positions P300–P314 are RNA gate.

This sequence belongs to the eIF-3 subunit D family. Component of the eukaryotic translation initiation factor 3 (eIF-3) complex. The eIF-3 complex appears to include tif32/eif3a, SPAC25G10.08/eif3b, tif33/eif3c, SPBC4C3.07/eif3f, tif35/eif3g and sum1/eif3i. This set of common subunits may also associate exclusively with either moe1/eif3d and int6/eif3e, or with SPAC821.05/eif3h and SPAC1751.03/eif3m. The eIF-3 complex may also include SPAC3A12.13c/eif3j.

It localises to the cytoplasm. In terms of biological role, mRNA cap-binding component of the eukaryotic translation initiation factor 3 (eIF-3) complex, which is involved in protein synthesis of a specialized repertoire of mRNAs and, together with other initiation factors, stimulates binding of mRNA and methionyl-tRNAi to the 40S ribosome. The eIF-3 complex specifically targets and initiates translation of a subset of mRNAs involved in cell proliferation. In the eIF-3 complex, eif3d specifically recognizes and binds the 7-methylguanosine cap of a subset of mRNAs. In Schizosaccharomyces pombe (strain 972 / ATCC 24843) (Fission yeast), this protein is Eukaryotic translation initiation factor 3 subunit D (moe1).